Here is a 114-residue protein sequence, read N- to C-terminus: Large ribosomal subunit protein bL20 (114 aa).

Belongs to the bacterial ribosomal protein bL20 family.

In terms of biological role, binds directly to 23S ribosomal RNA and is necessary for the in vitro assembly process of the 50S ribosomal subunit. It is not involved in the protein synthesizing functions of that subunit. The chain is Large ribosomal subunit protein bL20 from Anaeromyxobacter dehalogenans (strain 2CP-C).